The primary structure comprises 1412 residues: ABC transporter C family member 3 (1412 aa).

Positions 1-34 are disordered; the sequence is MELEEVGVEANQPNNDQGSKKQNKNKDKKVKKEK. A compositionally biased stretch (basic residues) spans 21 to 34; that stretch reads KQNKNKDKKVKKEK. A run of 6 helical transmembrane segments spans residues 115–135, 161–181, 236–256, 261–281, 346–366, and 379–399; these read FGLY…SQFV, MGYY…VCLY, VFQL…CLAL, IGWP…FNGI, AMLI…VFSS, and IFAA…LPII. An ABC transmembrane type-1 1 domain is found at 119 to 405; that stretch reads FVLSWFFYAI…LPIIVALGIQ (287 aa). Residues 439–662 form the ABC transporter 1 domain; it reads IRDATLTWNQ…QKEFSGLLQA (224 aa). 474–481 serves as a coordination point for ATP; sequence GSVGSGKS. A run of 5 helical transmembrane segments spans residues 724-744, 787-807, 854-874, 875-895, and 967-987; these read WKYI…FFLM, IYIG…FLFF, NLMA…VATL, IIIS…CIIF, and WLGL…CLFI. One can recognise an ABC transmembrane type-1 2 domain in the interval 735 to 1025; that stretch reads FLMAFIFFLM…ATLQAADTET (291 aa). Positions 1062 to 1296 constitute an ABC transporter 2 domain; sequence ITFDNLVMRY…PAGLLNWLVE (235 aa). An ATP-binding site is contributed by 1096-1103; that stretch reads GRTGAGKS. The segment at 1316-1412 is disordered; the sequence is GVNIDQITPP…DNDNSEAGDN (97 aa). Residues 1342–1351 show a composition bias toward polar residues; sequence NINSPPQQSL. Residues 1367–1397 show a composition bias toward low complexity; it reads DNNNNNNNNNNNNNNNNNNNNNNNNNNNNND. A compositionally biased stretch (acidic residues) spans 1398–1412; the sequence is NDNDNDNDNSEAGDN.

It belongs to the ABC transporter superfamily. ABCC family. Conjugate transporter (TC 3.A.1.208) subfamily.

It localises to the membrane. This chain is ABC transporter C family member 3 (abcC3), found in Dictyostelium discoideum (Social amoeba).